The primary structure comprises 510 residues: Aspartate kinase FUB3 (510 aa).

2 consecutive ACT domains span residues 372-440 (ILSN…VLPD) and 446-510 (LVGA…KNAM).

It belongs to the aspartokinase family.

The enzyme catalyses L-aspartate + ATP = 4-phospho-L-aspartate + ADP. The protein operates within mycotoxin biosynthesis. Aspartate kinase; part of the gene cluster that mediates the biosynthesis of fusaric acid, a mycotoxin with low to moderate toxicity to animals and humans, but with high phytotoxic properties. L-aspartate is suggested as fusaric acid amino acid precursor that is activated and further processed to O-acetyl-L-homoserine by cluster enzymes aspartate kinase FUB3 and homoserine O-acetyltransferase FUB5, as well as enzymes of the primary metabolism. The polyketide synthase (PKS) FUB1 generates the triketide trans-2-hexenal which is presumptively released by the hydrolase FUB4 and linked to the NRPS-bound amino acid precursor by NAD(P)-dependent dehydrogenase FUB6. FUB1, FUB4, and the non-canonical NRPS Fub8 may form an enzyme complex. Further processing of the NRPS-bound intermediate might be carried out by FUB6 and the sulfhydrylase FUB7, enabling a spontaneous electrocyclization to close the carbon backbone of fusaric acid. Dihydrofusaric acid is likely to be released via reduction by the thioester reductase (TR) domain of FUB8 whereupon the final oxidation to fusaric acid may (also) be performed by the FMN-dependent dehydrogenase FUB9. The sequence is that of Aspartate kinase FUB3 from Gibberella moniliformis (strain M3125 / FGSC 7600) (Maize ear and stalk rot fungus).